The primary structure comprises 276 residues: Putative translation initiation factor eIF-2B subunit 2-like (276 aa).

This sequence belongs to the eIF-2B alpha/beta/delta subunits family. As to quaternary structure, complex of two different subunits.

In terms of biological role, catalyzes the exchange of initiation factor 2-bound GDP for GTP. This Pyrococcus furiosus (strain ATCC 43587 / DSM 3638 / JCM 8422 / Vc1) protein is Putative translation initiation factor eIF-2B subunit 2-like.